Reading from the N-terminus, the 255-residue chain is 4-hydroxy-tetrahydrodipicolinate reductase (255 aa).

NAD(+)-binding positions include 9–14, 89–91, and 115–118; these read GYRGKM, GTT, and APNF. His-145 serves as the catalytic Proton donor/acceptor. His-146 is a (S)-2,3,4,5-tetrahydrodipicolinate binding site. Lys-149 serves as the catalytic Proton donor. (S)-2,3,4,5-tetrahydrodipicolinate is bound at residue 155 to 156; sequence GT.

This sequence belongs to the DapB family.

It is found in the cytoplasm. The enzyme catalyses (S)-2,3,4,5-tetrahydrodipicolinate + NAD(+) + H2O = (2S,4S)-4-hydroxy-2,3,4,5-tetrahydrodipicolinate + NADH + H(+). It catalyses the reaction (S)-2,3,4,5-tetrahydrodipicolinate + NADP(+) + H2O = (2S,4S)-4-hydroxy-2,3,4,5-tetrahydrodipicolinate + NADPH + H(+). It participates in amino-acid biosynthesis; L-lysine biosynthesis via DAP pathway; (S)-tetrahydrodipicolinate from L-aspartate: step 4/4. In terms of biological role, catalyzes the conversion of 4-hydroxy-tetrahydrodipicolinate (HTPA) to tetrahydrodipicolinate. The polypeptide is 4-hydroxy-tetrahydrodipicolinate reductase (Streptococcus uberis (strain ATCC BAA-854 / 0140J)).